A 723-amino-acid polypeptide reads, in one-letter code: ESX-1 secretion-associated protein EspK (723 aa).

Disordered regions lie at residues 175 to 360 (DLLQ…TPAA) and 393 to 451 (SGAG…GTPV). Residues 200–209 (TPGTPITPGT) are compositionally biased toward low complexity. Residues 210–229 (PITPIPGAPVTPITPTPGTP) show a composition bias toward pro residues. The segment covering 230-249 (VTPVTPGKPVTPVTPVKPGT) has biased composition (low complexity). Composition is skewed to pro residues over residues 250–265 (PGEP…PVAP) and 274–308 (PVTP…PSGP). 3 stretches are compositionally biased toward low complexity: residues 309–319 (ATPGTPGGEPA), 393–404 (SGAGSHAATGRA), and 412–426 (AAAP…RTAP). Residues 432–444 (STDHIDKPDRSES) show a composition bias toward basic and acidic residues.

It localises to the cytoplasm. In terms of biological role, may act as a chaperone that facilitates EspB secretion through an interaction with EccCb1. The protein is ESX-1 secretion-associated protein EspK of Mycobacterium tuberculosis (strain CDC 1551 / Oshkosh).